A 420-amino-acid chain; its full sequence is Chaperone protein dnaJ 3 (420 aa).

Residues 14 to 75 (KFYEILGVPK…EKREIYDQYG (62 aa)) enclose the J domain. Residues 135 to 219 (GTMKKLSLSR…CKGDKVIPEK (85 aa)) form a CR-type zinc finger. Zn(2+)-binding residues include C148, C151, C164, C167, C191, C194, C207, and C210. CXXCXGXG motif repeat units lie at residues 148 to 155 (CSKCNGKG), 164 to 171 (CGGCQGSG), 191 to 198 (CNECKGTG), and 207 to 214 (CPQCKGDK). The interval 376–420 (ETTLHDVNIEDEMRRKAQAQREAYDDDDEDDDHPGGAQRVQCAQQ) is disordered. The segment covering 377-390 (TTLHDVNIEDEMRR) has biased composition (basic and acidic residues). C417 is modified (cysteine methyl ester). C417 is lipidated: S-farnesyl cysteine. A propeptide spans 418–420 (AQQ) (removed in mature form).

This sequence belongs to the DnaJ family. A/I subfamily. In terms of assembly, homodimer. Zn(2+) serves as cofactor. Farnesylated. In terms of tissue distribution, roots, shoots, flowers, siliques and cotyledons.

It is found in the membrane. Plays a continuous role in plant development probably in the structural organization of compartments. This Arabidopsis thaliana (Mouse-ear cress) protein is Chaperone protein dnaJ 3 (ATJ3).